The primary structure comprises 174 residues: NADH-quinone oxidoreductase subunit C (174 aa).

It belongs to the complex I 30 kDa subunit family. NDH-1 is composed of 14 different subunits. Subunits NuoB, C, D, E, F, and G constitute the peripheral sector of the complex.

The protein resides in the cell membrane. It carries out the reaction a quinone + NADH + 5 H(+)(in) = a quinol + NAD(+) + 4 H(+)(out). In terms of biological role, NDH-1 shuttles electrons from NADH, via FMN and iron-sulfur (Fe-S) centers, to quinones in the respiratory chain. The immediate electron acceptor for the enzyme in this species is believed to be ubiquinone. Couples the redox reaction to proton translocation (for every two electrons transferred, four hydrogen ions are translocated across the cytoplasmic membrane), and thus conserves the redox energy in a proton gradient. The chain is NADH-quinone oxidoreductase subunit C from Roseiflexus castenholzii (strain DSM 13941 / HLO8).